The chain runs to 905 residues: Dopamine D2-like receptor (905 aa).

Residues 1 to 23 are disordered; it reads MLSPFDWRRGISSSGTGGTMAAQ. Over 1–377 the chain is Extracellular; the sequence is MLSPFDWRRG…GELRVVDHNY (377 aa). 8 N-linked (GlcNAc...) asparagine glycosylation sites follow: N88, N146, N156, N166, N174, N257, N314, and N343. A helical membrane pass occupies residues 378-398; it reads WALILILFPILTLFGNILVIL. Residues 399–416 are Cytoplasmic-facing; sequence SVCRERSLQTVTNYFIVS. Residues 417-437 form a helical membrane-spanning segment; it reads LAIADLLVAVVVMPFAVYFLV. Residues 438–450 lie on the Extracellular side of the membrane; sequence NGAWALPDVVCDF. C448 and C525 are oxidised to a cystine. A helical membrane pass occupies residues 451–471; it reads YIAMDVICSTSSIFNLVAISI. At 472–493 the chain is on the cytoplasmic side; that stretch reads DRYIAVTQPIKYAKHKNSRRVC. A helical membrane pass occupies residues 494–514; that stretch reads LTILLVWAISAAIGSPIVLGL. Over 515–531 the chain is Extracellular; sequence NNTPNREPDVCAFYNAD. The helical transmembrane segment at 532–552 threads the bilayer; sequence FILYSSLSSFYIPCIIMVFLY. At 553–830 the chain is on the cytoplasmic side; the sequence is WNIFKALRSR…AKKERKATKT (278 aa). Disordered regions lie at residues 600–631, 702–753, and 780–799; these read SRHA…ISPD, ATSA…SVGV, and DSTL…KNSQ. Residues 702-722 are compositionally biased toward low complexity; it reads ATSAAPRSSGSPPDSPLPSGA. Residues 723-734 are compositionally biased toward polar residues; the sequence is TLQRSSVSSQRR. Basic and acidic residues predominate over residues 735–746; sequence PTGDDSPKRGEP. A helical membrane pass occupies residues 831–851; that stretch reads LAIVLGVFLFCWLPFFSCNIM. Topologically, residues 852–869 are extracellular; that stretch reads DAMCAKFKKDCRPGLTAY. Residues 870 to 890 form a helical membrane-spanning segment; sequence MMTTWLGYINSFVNPVIYTIF. Residues 891–905 lie on the Cytoplasmic side of the membrane; the sequence is NPEFRKAFKKIMHMG.

It belongs to the G-protein coupled receptor 1 family. In terms of tissue distribution, highest expression is in adult heads.

The protein resides in the cell membrane. Functionally, receptor for dopamine. The activity of this receptor is mediated by G proteins which inhibit adenylyl cyclase. This Drosophila melanogaster (Fruit fly) protein is Dopamine D2-like receptor.